The sequence spans 1163 residues: MPKRQDIKSILIIGAGPIVIGQACEFDYSGTQACKALKEEGYRVILVNSNPATIMTDPGLADATYVEPITPEVVAKIIAKERPDALLPTMGGQTALNTALSLRRMGVLDRYNVEMIGAKPEAIDKAEDRALFREAMAHIGLETPKSRLANATDIKDHDRKSHEAERSALKAKLSGDELDKALDELENQWNLGEGDRKQRYVNHAMAIAAQALDDVGLPAIIRPSFTLGGTGGGIAYNRSEFFEIVGSGLDASPTTEVLIEESVLGWKEYEMEVVRDKADNCIIICSIENIDPMGVHTGDSITVAPALTLTDKEYQIMRNASIAVLREIGVETGGSNVQFAVNPENGRLVVIEMNPRVSRSSALASKATGFPIAKIAAKLAVGYTLDELENDITGGATPASFEPSIDYVVTKIPRFAFEKFPGAEPTLTTAMKSVGEVMAIGRTFAESLQKALRGLETGLTGLDEIEVPDFDDNGDGRNAIRAALGTPTPDRLRMVAQALRLGMSEAEVHEACKIDPWFIAQFKAIVDMEARIREHGLPADAENLRMLKAMGFSDARLATLTGKRPKEVAELRNALNVRPVYKRIDTCAAEFASPTAYMYSTYETPFVGAARSEAQVSDRKKVVILGGGPNRIGQGIEFDYCCCHAAFALKDAGYEAIMINCNPETVSTDYDTSDRLYFEPLTAEDVIEIMRAEQENGTLHGVIVQFGGQTPLKLAEALEKNGIPILGTAPDAIDLAEDRDRFQKLLMKLDLNQPNNGIAYSVEQARLVAGEIGFPLVVRPSYVLGGRAMQIIHSESMLQSYLLDTVPGLVPEDIKQRYPNDKTGQINTLLGKNPLLFDSYLTNAIEVDVDCLCDGKDVFVSGIMEHIEEAGIHSGDSACSLPVHSLGTDMVDELERQTGALARALNVGGLMNVQFAIKDGTIYVLEVNPRASRTVPFVAKTIGAPIAKIAARVMAGEMLDEAIAAYGKKPNPRNLKHIAVKEAVFPFARFPGVDTLLGPEMRSTGEVIGLDTDYALAFAKSQLGAGVDLPRDGTVFVSVRDEDKERVLPAIRILSDIGFKVMATGGTARFLGEQGIVATKINKVLEGRPHVEDAIRNRQVQLVINTTDGNKAISDSKSLRRATLMQKVPYYTTMAGAEAAALAIKALKAGNLEVRPLQSYFET.

Positions 1–456 are carboxyphosphate synthetic domain; sequence MPKRQDIKSI…SLQKALRGLE (456 aa). Arg-129 contacts ATP. A disordered region spans residues 148-170; the sequence is LANATDIKDHDRKSHEAERSALK. Residues 153-170 are compositionally biased toward basic and acidic residues; that stretch reads DIKDHDRKSHEAERSALK. In terms of domain architecture, ATP-grasp 1 spans 185 to 381; the sequence is LENQWNLGEG…IAKIAAKLAV (197 aa). The ATP site is built by Arg-222, Gly-228, Gly-229, Glu-261, Val-263, Glu-268, Gly-294, Val-295, His-296, Gln-338, and Glu-352. Positions 338, 352, and 354 each coordinate Mg(2+). Gln-338, Glu-352, and Asn-354 together coordinate Mn(2+). Residues 457-614 form an oligomerization domain region; sequence TGLTGLDEIE…PFVGAARSEA (158 aa). A carbamoyl phosphate synthetic domain region spans residues 615-1026; that stretch reads QVSDRKKVVI…AFAKSQLGAG (412 aa). Positions 743 to 955 constitute an ATP-grasp 2 domain; that stretch reads QKLLMKLDLN…IAKIAARVMA (213 aa). Residues Arg-779, Ser-839, Leu-841, Glu-846, Gly-871, Ile-872, His-873, Ser-874, Gln-914, and Glu-926 each coordinate ATP. Residues Gln-914, Glu-926, and Asn-928 each contribute to the Mg(2+) site. 3 residues coordinate Mn(2+): Gln-914, Glu-926, and Asn-928. The MGS-like domain maps to 1027 to 1163; it reads VDLPRDGTVF…VRPLQSYFET (137 aa). Residues 1027-1163 form an allosteric domain region; it reads VDLPRDGTVF…VRPLQSYFET (137 aa).

This sequence belongs to the CarB family. Composed of two chains; the small (or glutamine) chain promotes the hydrolysis of glutamine to ammonia, which is used by the large (or ammonia) chain to synthesize carbamoyl phosphate. Tetramer of heterodimers (alpha,beta)4. Mg(2+) serves as cofactor. The cofactor is Mn(2+).

It catalyses the reaction hydrogencarbonate + L-glutamine + 2 ATP + H2O = carbamoyl phosphate + L-glutamate + 2 ADP + phosphate + 2 H(+). The catalysed reaction is hydrogencarbonate + NH4(+) + 2 ATP = carbamoyl phosphate + 2 ADP + phosphate + 2 H(+). It functions in the pathway amino-acid biosynthesis; L-arginine biosynthesis; carbamoyl phosphate from bicarbonate: step 1/1. It participates in pyrimidine metabolism; UMP biosynthesis via de novo pathway; (S)-dihydroorotate from bicarbonate: step 1/3. Functionally, large subunit of the glutamine-dependent carbamoyl phosphate synthetase (CPSase). CPSase catalyzes the formation of carbamoyl phosphate from the ammonia moiety of glutamine, carbonate, and phosphate donated by ATP, constituting the first step of 2 biosynthetic pathways, one leading to arginine and/or urea and the other to pyrimidine nucleotides. The large subunit (synthetase) binds the substrates ammonia (free or transferred from glutamine from the small subunit), hydrogencarbonate and ATP and carries out an ATP-coupled ligase reaction, activating hydrogencarbonate by forming carboxy phosphate which reacts with ammonia to form carbamoyl phosphate. The protein is Carbamoyl phosphate synthase large chain of Rhizobium meliloti (strain 1021) (Ensifer meliloti).